The sequence spans 134 residues: MKSVFTISASLAISLMLCCTAQANDHKILGVIAMPRNETNDLALKLPVCRIVKRIQLSADHGDLQLSGASVYFKAARSASQSLNIPSEIKEGQTTDWININSDNDNKRCVSKITFSGHTVNSSDMATLKIIGDD.

An N-terminal signal peptide occupies residues 1-23 (MKSVFTISASLAISLMLCCTAQA).

This sequence belongs to the UPF0412 family.

In Escherichia coli (strain ATCC 8739 / DSM 1576 / NBRC 3972 / NCIMB 8545 / WDCM 00012 / Crooks), this protein is UPF0412 protein YaaI.